Consider the following 555-residue polypeptide: Urocanate hydratase (555 aa).

NAD(+) contacts are provided by residues 51–52, Gln-129, 175–177, Glu-195, 262–266, 272–273, and Tyr-321; these read GG, GMG, QTSAH, and YL. Cys-409 is an active-site residue. Gly-491 is an NAD(+) binding site.

Belongs to the urocanase family. NAD(+) is required as a cofactor.

It is found in the cytoplasm. It carries out the reaction 4-imidazolone-5-propanoate = trans-urocanate + H2O. It functions in the pathway amino-acid degradation; L-histidine degradation into L-glutamate; N-formimidoyl-L-glutamate from L-histidine: step 2/3. Functionally, catalyzes the conversion of urocanate to 4-imidazolone-5-propionate. The sequence is that of Urocanate hydratase from Xanthomonas campestris pv. campestris (strain ATCC 33913 / DSM 3586 / NCPPB 528 / LMG 568 / P 25).